Reading from the N-terminus, the 343-residue chain is GTPase Obg (343 aa).

The 159-residue stretch at 1–159 (MKFLDQAKIY…RWVWLRLKLI (159 aa)) folds into the Obg domain. Positions 160-328 (ADAGLVGLPN…LLRQVMTYVA (169 aa)) constitute an OBG-type G domain. GTP is bound by residues 166–173 (GLPNAGKS), 191–195 (FTTLH), 213–216 (DIPG), 280–283 (NKCD), and 309–311 (SGV). 2 residues coordinate Mg(2+): Ser-173 and Thr-193.

Belongs to the TRAFAC class OBG-HflX-like GTPase superfamily. OBG GTPase family. As to quaternary structure, monomer. The cofactor is Mg(2+).

The protein resides in the cytoplasm. Functionally, an essential GTPase which binds GTP, GDP and possibly (p)ppGpp with moderate affinity, with high nucleotide exchange rates and a fairly low GTP hydrolysis rate. Plays a role in control of the cell cycle, stress response, ribosome biogenesis and in those bacteria that undergo differentiation, in morphogenesis control. The polypeptide is GTPase Obg (Granulibacter bethesdensis (strain ATCC BAA-1260 / CGDNIH1)).